The following is a 523-amino-acid chain: Uridylate cyclase (523 aa).

2 consecutive Guanylate cyclase domains span residues 69-209 (VHVY…AKLA) and 318-438 (MSIF…IGIR). A ribonucleoside 5'-triphosphate is bound by residues Tyr-72 and Arg-125. Mn(2+)-binding residues include Asp-323, Ile-324, and Asp-372.

This sequence belongs to the adenylyl cyclase class-4/guanylyl cyclase family. Pyrimidine cyclase subfamily. Monomer. Mn(2+) is required as a cofactor.

It is found in the cytoplasm. The enzyme catalyses UTP = 3',5'-cyclic UMP + diphosphate. Pycsar (pyrimidine cyclase system for antiphage resistance) provides immunity against bacteriophage. The pyrimidine cyclase (PycC) synthesizes cyclic nucleotides in response to infection; these serve as specific second messenger signals. The signals activate the nearby effector, leading to bacterial cell death and abortive phage infection. A clade A Pycsar system. Its function is as follows. The pyrimidine cyclase gene of a two-gene Pycsar system, generates cyclic UMP (cUMP) from UTP, has little to no activity on ATP, CTP or GTP. Expression of this and effector RsPycTM (AC A0A4R2UGS4) probably confers resistance to some bacteriophage. The genes are probably only expressed in response to bacteriophage infection. The sequence is that of Uridylate cyclase from Rhizobium sp. (strain PP-F2F-G36).